Consider the following 268-residue polypeptide: Ethylene-responsive transcription factor ERN1 (268 aa).

Residues 1–21 (MEIQFQQPNMQNQKAGISVTN) show a composition bias toward polar residues. Positions 1 to 36 (MEIQFQQPNMQNQKAGISVTNKGGKFKGRNRNSNNT) are disordered. The segment at residues 38–95 (KFVGVRQRPSGRWVAEIKDTTQKIRMWLGTFETAEEAARAYDEAACLLRGSNTRTNFI) is a DNA-binding region (AP2/ERF). The segment at 114–154 (NRKGDKKQEDGAVASAPSNSKTTISNTSTITSNDDNKESTL) is disordered. The segment covering 131 to 146 (SNSKTTISNTSTITSN) has biased composition (low complexity).

Belongs to the AP2/ERF transcription factor family. ERF subfamily. In terms of tissue distribution, expressed in roots, root hairs and leaves. Expressed in root epidermis and root hairs.

It localises to the nucleus. Functionally, transcription factor involved in symbiotic nodule signaling in response to rhizobial Nod factors (NFs). Binds to the GCC-box (NF-responsive box) of ENOD11 promoter. Acts as a transcriptional activator of NF-responsive box-containing target gene promoters in root hairs. Functions as a transcriptional regulator required for root infection by symbiotic rhizobia, infection thread (IT) formation and maintenance, and nodule development. Necessary for NF-induced gene expression and spontaneous nodulation activated by CCAMK. Functions downstream of CCAMK to activate nodulation gene expression. Involved in early stages of root nodule development. Functions redundantly with ERN2. Is essential with ERN2 for the initiation of root hair infection, and nodule organogenesis and development. Required for accurate expression of the NF signaling genes ENOD11 and ENOD12. In Medicago truncatula (Barrel medic), this protein is Ethylene-responsive transcription factor ERN1.